Reading from the N-terminus, the 514-residue chain is 2,3-bisphosphoglycerate-independent phosphoglycerate mutase (514 aa).

Positions 14 and 64 each coordinate Mn(2+). Catalysis depends on S64, which acts as the Phosphoserine intermediate. Residues H125, 155–156 (RD), R187, R193, 263–266 (RADR), and K336 each bind substrate. Mn(2+) is bound by residues D403, H407, D444, H445, and H463.

Belongs to the BPG-independent phosphoglycerate mutase family. As to quaternary structure, monomer. Mn(2+) is required as a cofactor.

It carries out the reaction (2R)-2-phosphoglycerate = (2R)-3-phosphoglycerate. It functions in the pathway carbohydrate degradation; glycolysis; pyruvate from D-glyceraldehyde 3-phosphate: step 3/5. In terms of biological role, catalyzes the interconversion of 2-phosphoglycerate and 3-phosphoglycerate. This is 2,3-bisphosphoglycerate-independent phosphoglycerate mutase from Shewanella denitrificans (strain OS217 / ATCC BAA-1090 / DSM 15013).